Consider the following 117-residue polypeptide: uncharacterized protein (117 aa).

The next 2 membrane-spanning stretches (helical) occupy residues 9-29 (ITSHDNFIAYIFFTFFTFIPF) and 56-76 (VIIVGPLAPFSSYSSPFFFIP).

Its subcellular location is the membrane. This is an uncharacterized protein from Saccharomyces cerevisiae (strain ATCC 204508 / S288c) (Baker's yeast).